A 1279-amino-acid polypeptide reads, in one-letter code: ATP-dependent helicase/nuclease subunit A (1279 aa).

The UvrD-like helicase ATP-binding domain occupies 4 to 499; sequence TKWTDEQRQA…VKLFKNFRSR (496 aa). 25-32 is a binding site for ATP; the sequence is AGAGAGKT. The UvrD-like helicase C-terminal domain maps to 526-853; the sequence is EEALKVGASY…RIMSIHKSKG (328 aa).

It belongs to the helicase family. AddA subfamily. As to quaternary structure, heterodimer of AddA and AddB/RexB. It depends on Mg(2+) as a cofactor.

The catalysed reaction is Couples ATP hydrolysis with the unwinding of duplex DNA by translocating in the 3'-5' direction.. The enzyme catalyses ATP + H2O = ADP + phosphate + H(+). In terms of biological role, the heterodimer acts as both an ATP-dependent DNA helicase and an ATP-dependent, dual-direction single-stranded exonuclease. Recognizes the chi site generating a DNA molecule suitable for the initiation of homologous recombination. The AddA nuclease domain is required for chi fragment generation; this subunit has the helicase and 3' -&gt; 5' nuclease activities. In Clostridium botulinum (strain Kyoto / Type A2), this protein is ATP-dependent helicase/nuclease subunit A.